Consider the following 328-residue polypeptide: L-asparaginase (328 aa).

Positions 1-320 (MKLLVLGTGG…EEIRKIMERN (320 aa)) constitute an Asparaginase/glutaminase domain. Catalysis depends on threonine 11, which acts as the Nucleophile; O-isoaspartyl threonine intermediate. L-aspartate contacts are provided by threonine 11, aspartate 53, serine 54, threonine 85, and aspartate 86. Active-site charge relay system residues include threonine 85, aspartate 86, lysine 156, and tyrosine 274.

This sequence belongs to the asparaginase 1 family. In terms of assembly, homodimer.

It catalyses the reaction L-asparagine + H2O = L-aspartate + NH4(+). Chohan et al. found that divalent metal ions and EDTA do not have any significant effect on enzyme activity, indicating that activity is independent of metal ions. In another study, Hong et al. showed that activity is enhanced by Mg(2+), significantly inhibited by Co(2+) and Ni(2+), and moderately inhibited by Ca(2+), Cu(2+) and EDTA. Unfolding studies suggest that urea cannot induce complete unfolding and inactivation of the enzyme even at a concentration 8 M. However, in the presence of 4 M guanidine hydrochloride, the enzyme structure is unfolded with complete loss of enzyme activity. In terms of biological role, catalyzes the hydrolysis of L-asparagine into L-aspartate and ammonia. Also displays D-asparaginase activity, which is about 50% of the L-asparaginase activity. Does not exhibit glutaminase activity. This Thermococcus kodakarensis (strain ATCC BAA-918 / JCM 12380 / KOD1) (Pyrococcus kodakaraensis (strain KOD1)) protein is L-asparaginase.